The chain runs to 142 residues: SPbeta prophage-derived deoxyuridine 5'-triphosphate nucleotidohydrolase YosS (142 aa).

2 residues coordinate dUMP: Ser62 and Asn74. Residue Asp80 is the Proton acceptor of the active site. Tyr83 and Phe91 together coordinate dUMP.

The protein belongs to the dUTPase family. Homotrimer. It depends on Mg(2+) as a cofactor.

The catalysed reaction is dUTP + H2O = dUMP + diphosphate + H(+). It participates in pyrimidine metabolism; dUMP biosynthesis; dUMP from dCTP (dUTP route): step 2/2. In terms of biological role, involved in nucleotide metabolism: produces dUMP, the immediate precursor of thymidine nucleotides and decreases the intracellular concentration of dUTP, so that uracil cannot be incorporated into DNA. The Ser-62 side chain changes its position upon ligand-binding to make contacts with the nucleotide phosphates. In Bacillus subtilis (strain 168), this protein is SPbeta prophage-derived deoxyuridine 5'-triphosphate nucleotidohydrolase YosS.